The following is a 920-amino-acid chain: KIN14B-interacting protein At4g14310 (920 aa).

Residues 1 to 10 are compositionally biased toward basic residues; that stretch reads MSASTNRRRL. Disordered stretches follow at residues 1–199 and 309–375; these read MSAS…EKST and IDGP…EKPS. A compositionally biased stretch (polar residues) spans 35–54; sequence PISSKNSNPALQKSLSSKEN. Over residues 90-105 the composition is skewed to low complexity; the sequence is TRSTSSGLRGRSSSPS. Over residues 112–135 the composition is skewed to basic and acidic residues; it reads SDLRKRNESRVIGEKGESGQDKKS. Composition is skewed to polar residues over residues 137-147 and 166-184; these read LKSSGFKQGTS and CPVNSSKFEGSSVARNSIS. A compositionally biased stretch (basic and acidic residues) spans 327–337; that stretch reads LNKEELEDRLL. The span at 345–355 shows a compositional bias: polar residues; it reads SRTQSKTSSHV. The segment covering 357–374 has biased composition (basic and acidic residues); that stretch reads KGHDSVESNKAVNAEEKP. Residues 435–463 adopt a coiled-coil conformation; that stretch reads TEILRANEALEEIDDEENREEMELEEIDD.

As to quaternary structure, interacts with KIN14B, CDKA-1, CKS1 and CKS2.

Its subcellular location is the cytoplasm. Might be involved in division plane determination. In Arabidopsis thaliana (Mouse-ear cress), this protein is KIN14B-interacting protein At4g14310.